A 190-amino-acid polypeptide reads, in one-letter code: Elongation factor P-like protein (190 aa).

The protein belongs to the elongation factor P family.

The sequence is that of Elongation factor P-like protein from Psychromonas ingrahamii (strain DSM 17664 / CCUG 51855 / 37).